Consider the following 226-residue polypeptide: Ribosome-recycling factor, mitochondrial (226 aa).

The protein belongs to the RRF family.

The protein resides in the mitochondrion. Functionally, necessary for protein synthesis in mitochondria. Functions as a ribosome recycling factor in mitochondria. The chain is Ribosome-recycling factor, mitochondrial (RRF1) from Eremothecium gossypii (strain ATCC 10895 / CBS 109.51 / FGSC 9923 / NRRL Y-1056) (Yeast).